Reading from the N-terminus, the 367-residue chain is Damage-control phosphatase At2g17340 (367 aa).

Position 1 is an N-acetylmethionine (Met-1). Residues Asp-220, Asn-221, and Asp-256 each contribute to the Mn(2+) site. The Subfamily II EGMGR motif motif lies at 318 to 322 (EGMGR).

It belongs to the damage-control phosphatase family. Phosphopantetheine phosphatase II subfamily. Multimer. Mn(2+) serves as cofactor. Ni(2+) is required as a cofactor.

Activity is strongly promoted by Co(2+), Ni(2+), Mg(2+), Cu(2+) and Mn(2+). Activity is inhibited by EDTA. In terms of biological role, metal-dependent phosphatase with probable damage-control functions. Shows phosphatase activity against several substrates, including sugar phosphates and p-nitrophenyl phosphate(pNPP). Prefers sugar phosphate substrates, including the extremely potent glycating agents ribose-5-phosphate and erythrose-4-phosphate. The chain is Damage-control phosphatase At2g17340 from Arabidopsis thaliana (Mouse-ear cress).